A 257-amino-acid chain; its full sequence is Glutamate racemase (257 aa).

Residues 12–13 and 44–45 contribute to the substrate site; these read DS and YG. Cys-75 acts as the Proton donor/acceptor in catalysis. 76-77 serves as a coordination point for substrate; that stretch reads NT. Residue Cys-176 is the Proton donor/acceptor of the active site. 177–178 contacts substrate; sequence TH.

This sequence belongs to the aspartate/glutamate racemases family.

The catalysed reaction is L-glutamate = D-glutamate. It functions in the pathway cell wall biogenesis; peptidoglycan biosynthesis. In terms of biological role, provides the (R)-glutamate required for cell wall biosynthesis. The protein is Glutamate racemase of Thermus thermophilus (strain ATCC 27634 / DSM 579 / HB8).